The following is a 428-amino-acid chain: Enolase (428 aa).

Gln163 contacts (2R)-2-phosphoglycerate. Catalysis depends on Glu205, which acts as the Proton donor. Mg(2+) contacts are provided by Asp242, Glu283, and Asp310. (2R)-2-phosphoglycerate contacts are provided by Lys335, Arg364, Ser365, and Lys386. The Proton acceptor role is filled by Lys335.

It belongs to the enolase family. Requires Mg(2+) as cofactor.

The protein resides in the cytoplasm. Its subcellular location is the secreted. It localises to the cell surface. The catalysed reaction is (2R)-2-phosphoglycerate = phosphoenolpyruvate + H2O. It functions in the pathway carbohydrate degradation; glycolysis; pyruvate from D-glyceraldehyde 3-phosphate: step 4/5. Its function is as follows. Catalyzes the reversible conversion of 2-phosphoglycerate (2-PG) into phosphoenolpyruvate (PEP). It is essential for the degradation of carbohydrates via glycolysis. This is Enolase from Streptomyces avermitilis (strain ATCC 31267 / DSM 46492 / JCM 5070 / NBRC 14893 / NCIMB 12804 / NRRL 8165 / MA-4680).